The sequence spans 871 residues: Transient receptor potential cation channel subfamily V member 4 (871 aa).

Disordered regions lie at residues 1–68 (MADP…PNLR) and 110–143 (YGTYRHHPSDNKRWRRKVVEKQPQSPKAPAPQPP). Topologically, residues 1 to 469 (MADPGDGPRA…RDKWRKFGAV (469 aa)) are cytoplasmic. Residue Y110 is modified to Phosphotyrosine; by SRC-type Tyr-kinases. A compositionally biased stretch (basic and acidic residues) spans 116 to 129 (HPSDNKRWRRKVVE). ATP contacts are provided by residues K192, K197, N201, 236–239 (YRGQ), and R248. ANK repeat units follow at residues 237–266 (RGQTSLHIAIERRCKHYVELLVAQGADVHA) and 284–313 (FGELPLSLAACTNQPHIVNYLTENPHKKAD). 249-251 (RCK) is an a 1,2-diacyl-sn-glycero-3-phospho-(1D-myo-inositol-4,5-bisphosphate) binding site. Residue Y253 is modified to Phosphotyrosine; by LYN. A 1,2-diacyl-sn-glycero-3-phospho-(1D-myo-inositol-4,5-bisphosphate) is bound by residues 296–299 (NQPH) and K344. The stretch at 369–398 (DGLSPLMMAAKTGKIGVFQHIIRREVTDED) is one ANK 3 repeat. Residues 470 to 490 (SFYINVVSYLCAMVIFTLTAY) form a helical membrane-spanning segment. Residues 491–507 (YQPLEGTPPYPYRTTVD) are Extracellular-facing. The helical transmembrane segment at 508–534 (YLRLAGEVITLFTGVLFFFTSIKDLFT) threads the bilayer. Residues 535–547 (KKCPGVNSLFVDG) lie on the Cytoplasmic side of the membrane. The helical transmembrane segment at 548-568 (SFQLLYFIYSVLVVVSAALYL) threads the bilayer. The Extracellular portion of the chain corresponds to 569–572 (AGIE). A helical membrane pass occupies residues 573-593 (AYLAVMVFALVLGWMNALYFT). Residues 594-608 (RGLKLTGTYSIMIQK) are Cytoplasmic-facing. A helical membrane pass occupies residues 609 to 636 (ILFKDLFRFLLVYLLFMIGYASALVTLL). Residues 637-665 (NPCTNMKVCDEDQSNCTVPTYPACRDSET) are Extracellular-facing. N651 carries N-linked (GlcNAc...) asparagine glycosylation. The segment at residues 666–685 (FSAFLLDLFKLTIGMGDLEM) is an intramembrane region (pore-forming). Residues 679 to 682 (GMGD) carry the Selectivity filter motif. A Ca(2+)-binding site is contributed by D682. At 686–693 (LSSAKYPV) the chain is on the extracellular side. The helical transmembrane segment at 694 to 722 (VFILLLVTYIILTFVLLLNMLIALMGETV) threads the bilayer. Residues 723-871 (GQVSKESKHI…PKWRTDDAPL (149 aa)) are Cytoplasmic-facing. The residue at position 805 (Y805) is a Phosphotyrosine; by SRC-type Tyr-kinases. An interaction with calmodulin and ITPR3 region spans residues 812 to 831 (HTVGRLRRDRWSSVVPRVVE). S824 is modified (phosphoserine; by PKC and PKA). The disordered stretch occupies residues 850–871 (NPNCDGHQQGYAPKWRTDDAPL).

Belongs to the transient receptor (TC 1.A.4) family. TrpV subfamily. TRPV4 sub-subfamily. In terms of assembly, homotetramer. Interacts with calmodulin. Interacts with CTNNB1. The TRPV4 and CTNNB1 complex can interact with CDH1. Part of a complex containing MLC1, AQP4, HEPACAM and ATP1B1. Interacts with MAP7 and Src family Tyr protein kinases LYN, SRC, FYN, HCK, LCK and YES. Interacts with PACSIN1, PACSIN2 and PACSIN3 (via SH3 domain). Interacts with ITPR3. Interacts with AQP5; the interaction is probably indirect and regulates TRPV4 activation by hypotonicity. Interacts with ANO1. Interacts (via C-terminus) with PKD2 (via C-terminus). Interacts with DDX3X; this interaction is decreased when the channel is activated. N-glycosylated. Detected in liver, kidney, heart, brain cortex, cerebellum and brainstem (at protein level). Expressed in salivary glands (at protein level). Expressed in heart, lung, spleen, liver, kidney, brain, skeletal muscle and testis. In the central nervous system, expressed in the lamina terminalis (arched vascular organ and neurons of the subfornical organ), median preoptic area, ventral hippocampal commissure, and ependymal cells of the choroid plexus. In the cochlea, expressed in both inner and outer hair cells, and in marginal cells of the cochlear stria vascularis. Expressed in large neurons of the trigeminal ganglion. In the kidney cortex, strongly expressed by epithelial cells of tubules and much weaker in glomeruli.

It localises to the cell membrane. It is found in the apical cell membrane. The protein localises to the cell junction. The protein resides in the adherens junction. Its subcellular location is the cell projection. It localises to the cilium. It carries out the reaction Ca(2+)(in) = Ca(2+)(out). In terms of biological role, non-selective calcium permeant cation channel involved in osmotic sensitivity and mechanosensitivity. Activation by exposure to hypotonicity within the physiological range exhibits an outward rectification. Also activated by heat, low pH, citrate and phorbol esters. Increase of intracellular Ca(2+) potentiates currents. Channel activity seems to be regulated by a calmodulin-dependent mechanism with a negative feedback mechanism. Acts as a regulator of intracellular Ca(2+) in synoviocytes. Plays an obligatory role as a molecular component in the nonselective cation channel activation induced by 4-alpha-phorbol 12,13-didecanoate and hypotonic stimulation in synoviocytes and also regulates production of IL-8. Together with PKD2, forms mechano- and thermosensitive channels in cilium. Promotes cell-cell junction formation in skin keratinocytes and plays an important role in the formation and/or maintenance of functional intercellular barriers. Negatively regulates expression of PPARGC1A, UCP1, oxidative metabolism and respiration in adipocytes. Regulates expression of chemokines and cytokines related to pro-inflammatory pathway in adipocytes. Together with AQP5, controls regulatory volume decrease in salivary epithelial cells. Required for normal development and maintenance of bone and cartilage. In its inactive state, may sequester DDX3X at the plasma membrane. When activated, the interaction between both proteins is affected and DDX3X relocalizes to the nucleus. In neurons of the central nervous system, could play a role in triggering voluntary water intake in response to increased sodium concentration in body fluid. The chain is Transient receptor potential cation channel subfamily V member 4 (Trpv4) from Mus musculus (Mouse).